The primary structure comprises 117 residues: DNA-directed RNA polymerase subunit omega (117 aa).

Belongs to the RNA polymerase subunit omega family. As to quaternary structure, the RNAP catalytic core consists of 2 alpha, 1 beta, 1 beta' and 1 omega subunit. When a sigma factor is associated with the core the holoenzyme is formed, which can initiate transcription.

The catalysed reaction is RNA(n) + a ribonucleoside 5'-triphosphate = RNA(n+1) + diphosphate. In terms of biological role, promotes RNA polymerase assembly. Latches the N- and C-terminal regions of the beta' subunit thereby facilitating its interaction with the beta and alpha subunits. The protein is DNA-directed RNA polymerase subunit omega of Ruegeria pomeroyi (strain ATCC 700808 / DSM 15171 / DSS-3) (Silicibacter pomeroyi).